The primary structure comprises 402 residues: uncharacterized protein (402 aa).

The next 9 membrane-spanning stretches (helical) occupy residues 13-33 (IGVL…VNLA), 68-88 (FFIQ…GMVV), 108-128 (LMAL…GDIL), 149-169 (LLIW…LTSF), 223-243 (LNYF…AAAA), 261-281 (LWMA…VTDK), 283-303 (ICLL…VVYL), 327-347 (YLMQ…GLYG), and 353-373 (AGVL…HLWL).

The protein localises to the cell membrane. Involved in transport. This is an uncharacterized protein from Bacillus subtilis (strain 168).